The primary structure comprises 294 residues: ATP synthase gamma chain (294 aa).

This sequence belongs to the ATPase gamma chain family. As to quaternary structure, F-type ATPases have 2 components, CF(1) - the catalytic core - and CF(0) - the membrane proton channel. CF(1) has five subunits: alpha(3), beta(3), gamma(1), delta(1), epsilon(1). CF(0) has three main subunits: a, b and c.

Its subcellular location is the cell membrane. Produces ATP from ADP in the presence of a proton gradient across the membrane. The gamma chain is believed to be important in regulating ATPase activity and the flow of protons through the CF(0) complex. The sequence is that of ATP synthase gamma chain from Ruminiclostridium cellulolyticum (strain ATCC 35319 / DSM 5812 / JCM 6584 / H10) (Clostridium cellulolyticum).